Here is a 354-residue protein sequence, read N- to C-terminus: Mitogen-activated protein kinase kinase 1 (354 aa).

Residues 68-328 enclose the Protein kinase domain; sequence LEVIKVIGKG…AKELLEHKFV (261 aa). ATP is bound by residues 74–82 and K97; that span reads IGKGSSGNV. The active-site Proton acceptor is D190. T218 carries the post-translational modification Phosphothreonine. A Phosphoserine modification is found at S224. A Phosphothreonine modification is found at T228.

The protein belongs to the protein kinase superfamily. STE Ser/Thr protein kinase family. MAP kinase kinase subfamily. As to quaternary structure, interacts with MEKK1 and MPK4. May form a ternary complex composed of MEKK1 and MKK1/MKK2 and MPK4. Interacts with P.syringae type III effector HopF2. Interacts with MPK11. Phosphorylation at Thr-218 and Ser-224 by MAP kinase kinase kinases positively regulates kinase activity. In terms of tissue distribution, expressed in roots, stem, flowers and siliques.

The enzyme catalyses L-seryl-[protein] + ATP = O-phospho-L-seryl-[protein] + ADP + H(+). The catalysed reaction is L-threonyl-[protein] + ATP = O-phospho-L-threonyl-[protein] + ADP + H(+). It carries out the reaction L-tyrosyl-[protein] + ATP = O-phospho-L-tyrosyl-[protein] + ADP + H(+). Its activity is regulated as follows. Activated through serine and threonine phosphorylation in response to wounding, cold, drought, salt stresses, abscisic acid (ABA), hydrogen peroxide, bacterial flagellin and laminarin beta-glucan. Its function is as follows. MEKK1, MKK1/MKK2 and MPK4/MPK6 function in a signaling pathway that modulates the expression of genes responding to biotic and abiotic stresses and also plays an important role in pathogen defense by negatively regulating innate immunity. Activates by phosphorylation the downstream MPK4. Acts redundantly with MKK2. MKK1-MPK6 module mediates abscisic acid (ABA)-dependent CAT1 expression with H(2)O(2) production and response to drought and salt stress. MKK1-MPK6 module is also involved in sugar signaling during the process of seed germination. In Arabidopsis thaliana (Mouse-ear cress), this protein is Mitogen-activated protein kinase kinase 1 (MKK1).